Reading from the N-terminus, the 307-residue chain is Mitochondrial glycine transporter (307 aa).

Solcar repeat units lie at residues 8–87, 115–199, and 221–305; these read PRNS…MRSS, LTMY…SKQL, and TSTT…LVKR. The next 6 membrane-spanning stretches (helical) occupy residues 14–39, 62–88, 121–146, 174–197, 225–251, and 280–298; these read LIGGFFGGLTSAVALQPLDLLKTRIQ, GTLPSALRTSIGSALYLSCLNLMRSSL, LLTGAFARGLVGYITMPITVIKVRYE, GFGATCLRDAPYAGLYVLLYEKSK, VNTTSAVLSASLATTVTAPFDTIKTRM, and GLSMRLARKAFSAGIAWGI.

The protein belongs to the mitochondrial carrier (TC 2.A.29) family. SLC25A38 subfamily.

The protein localises to the mitochondrion. It is found in the mitochondrion inner membrane. It catalyses the reaction glycine(in) = glycine(out). Its function is as follows. Mitochondrial glycine transporter that imports glycine into the mitochondrial matrix. Plays an important role in providing glycine for the first enzymatic step in heme biosynthesis, the condensation of glycine with succinyl-CoA to produce 5-aminolevulinate (ALA) in the mitochondrial matrix. The protein is Mitochondrial glycine transporter of Saccharomyces cerevisiae (strain ATCC 204508 / S288c) (Baker's yeast).